The following is an 825-amino-acid chain: IQ and AAA domain-containing protein 1-like (825 aa).

Residues 206-235 enclose the IQ domain; that stretch reads RDQGAIVIQKVWKGYLQRKRIEQDRRVEME. Residues 344-366 show a composition bias toward basic and acidic residues; the sequence is QAQESRKKDQEKKEKNKEKEKEK. Disordered regions lie at residues 344–378 and 459–487; these read QAQE…KEEK and DREE…KDLT. Over residues 467 to 482 the composition is skewed to basic residues; sequence KSPKKKGGKKSGKKKK. 572–579 serves as a coordination point for ATP; it reads GPSGMGKK.

It belongs to the AAA ATPase family.

The chain is IQ and AAA domain-containing protein 1-like (Iqca1l) from Mus musculus (Mouse).